The chain runs to 968 residues: RNA polymerase-associated protein RapA (968 aa).

A Helicase ATP-binding domain is found at 164–334; that stretch reads DVGRRHAPRV…FARLRLLDPN (171 aa). 177–184 is an ATP binding site; sequence DEVGLGKT. The DEAH box motif lies at 280-283; it reads DEAH. Residues 490–685 form the Helicase C-terminal domain; sequence RVEWLMGYLT…ALKAQLEQGR (196 aa).

Belongs to the SNF2/RAD54 helicase family. RapA subfamily. As to quaternary structure, interacts with the RNAP. Has a higher affinity for the core RNAP than for the holoenzyme. Its ATPase activity is stimulated by binding to RNAP.

In terms of biological role, transcription regulator that activates transcription by stimulating RNA polymerase (RNAP) recycling in case of stress conditions such as supercoiled DNA or high salt concentrations. Probably acts by releasing the RNAP, when it is trapped or immobilized on tightly supercoiled DNA. Does not activate transcription on linear DNA. Probably not involved in DNA repair. The polypeptide is RNA polymerase-associated protein RapA (Salmonella paratyphi C (strain RKS4594)).